Here is a 286-residue protein sequence, read N- to C-terminus: Aspartate-semialdehyde dehydrogenase (286 aa).

Residues 10-13 (RGMV), 37-38 (TS), and Gln74 contribute to the NADP(+) site. Arg103 lines the phosphate pocket. Cys136 functions as the Acyl-thioester intermediate in the catalytic mechanism. Position 163 (Gln163) interacts with substrate. NADP(+) is bound by residues 166–167 (SG) and Pro194. Glu242 is a binding site for substrate. A phosphate-binding site is contributed by Lys245. Arg269 contributes to the substrate binding site. Catalysis depends on His276, which acts as the Proton acceptor.

Belongs to the aspartate-semialdehyde dehydrogenase family. Homodimer.

The catalysed reaction is L-aspartate 4-semialdehyde + phosphate + NADP(+) = 4-phospho-L-aspartate + NADPH + H(+). It functions in the pathway amino-acid biosynthesis; L-lysine biosynthesis via DAP pathway; (S)-tetrahydrodipicolinate from L-aspartate: step 2/4. Its pathway is amino-acid biosynthesis; L-methionine biosynthesis via de novo pathway; L-homoserine from L-aspartate: step 2/3. It participates in amino-acid biosynthesis; L-threonine biosynthesis; L-threonine from L-aspartate: step 2/5. Functionally, catalyzes the NADPH-dependent formation of L-aspartate-semialdehyde (L-ASA) by the reductive dephosphorylation of L-aspartyl-4-phosphate. The polypeptide is Aspartate-semialdehyde dehydrogenase (asd) (Actinobacillus pleuropneumoniae (Haemophilus pleuropneumoniae)).